Reading from the N-terminus, the 597-residue chain is tRNA uridine 5-carboxymethylaminomethyl modification enzyme MnmG (597 aa).

10–15 (GGGHAG) is a binding site for FAD. Position 267–281 (267–281 (GPRYCPSIEDKVVRF)) interacts with NAD(+).

This sequence belongs to the MnmG family. In terms of assembly, homodimer. Heterotetramer of two MnmE and two MnmG subunits. FAD serves as cofactor.

It localises to the cytoplasm. NAD-binding protein involved in the addition of a carboxymethylaminomethyl (cmnm) group at the wobble position (U34) of certain tRNAs, forming tRNA-cmnm(5)s(2)U34. This is tRNA uridine 5-carboxymethylaminomethyl modification enzyme MnmG from Thermus thermophilus (strain ATCC BAA-163 / DSM 7039 / HB27).